The chain runs to 309 residues: Probable lipid kinase YegS-like (309 aa).

The DAGKc domain occupies 1–134 (MAPSHWRLIL…VDLLRIDAEH (134 aa)). ATP-binding positions include threonine 39, 65 to 71 (GDGTLSE), and threonine 96. Positions 219, 222, and 224 each coordinate Mg(2+). Glutamate 280 acts as the Proton acceptor in catalysis.

It belongs to the diacylglycerol/lipid kinase family. YegS lipid kinase subfamily. Mg(2+) serves as cofactor. Ca(2+) is required as a cofactor.

It is found in the cytoplasm. Its function is as follows. Probably phosphorylates lipids; the in vivo substrate is unknown. This Xanthomonas oryzae pv. oryzae (strain MAFF 311018) protein is Probable lipid kinase YegS-like.